The sequence spans 157 residues: SsrA-binding protein (157 aa).

Belongs to the SmpB family.

Its subcellular location is the cytoplasm. Its function is as follows. Required for rescue of stalled ribosomes mediated by trans-translation. Binds to transfer-messenger RNA (tmRNA), required for stable association of tmRNA with ribosomes. tmRNA and SmpB together mimic tRNA shape, replacing the anticodon stem-loop with SmpB. tmRNA is encoded by the ssrA gene; the 2 termini fold to resemble tRNA(Ala) and it encodes a 'tag peptide', a short internal open reading frame. During trans-translation Ala-aminoacylated tmRNA acts like a tRNA, entering the A-site of stalled ribosomes, displacing the stalled mRNA. The ribosome then switches to translate the ORF on the tmRNA; the nascent peptide is terminated with the 'tag peptide' encoded by the tmRNA and targeted for degradation. The ribosome is freed to recommence translation, which seems to be the essential function of trans-translation. This chain is SsrA-binding protein, found in Bacillus licheniformis (strain ATCC 14580 / DSM 13 / JCM 2505 / CCUG 7422 / NBRC 12200 / NCIMB 9375 / NCTC 10341 / NRRL NRS-1264 / Gibson 46).